Consider the following 427-residue polypeptide: Glucose-6-phosphate isomerase (427 aa).

The Proton donor role is filled by E277. Catalysis depends on residues H298 and K414.

It belongs to the GPI family.

Its subcellular location is the cytoplasm. It catalyses the reaction alpha-D-glucose 6-phosphate = beta-D-fructose 6-phosphate. The protein operates within carbohydrate biosynthesis; gluconeogenesis. Its pathway is carbohydrate degradation; glycolysis; D-glyceraldehyde 3-phosphate and glycerone phosphate from D-glucose: step 2/4. In terms of biological role, catalyzes the reversible isomerization of glucose-6-phosphate to fructose-6-phosphate. In Mycoplasma mycoides subsp. mycoides SC (strain CCUG 32753 / NCTC 10114 / PG1), this protein is Glucose-6-phosphate isomerase.